A 306-amino-acid chain; its full sequence is Glutaminase (306 aa).

The substrate site is built by Ser64, Asn115, Glu159, Asn166, Tyr190, Tyr242, and Val260.

This sequence belongs to the glutaminase family. Homotetramer.

The catalysed reaction is L-glutamine + H2O = L-glutamate + NH4(+). In Aliivibrio fischeri (strain ATCC 700601 / ES114) (Vibrio fischeri), this protein is Glutaminase.